A 290-amino-acid chain; its full sequence is MDIEAYFERIGYKNSVNKLDLATLTEVLQHQMRAVPFENLSMHCGEAMCLGLEATFDHIVRKKRGGWCLQVNHLLYWALTKMGFETTMLGGYVYITPVNKYSSEMVHLLVQVTISDRNYIVDSAYGSSYQMWEPLELTSGKDQPQVPAIFRLTEENGTWYLDQIRREQDVPNQEFVNSDLLEKSKYRKIYSFTLEPRTIEDFEYVNTYLQTSPASVFVSTSFCSLQTSEGVCCLIGSTLTSRRFSYKDNVDLVEFKSLTEEEIEDVLKTTFGISLEKKFVPKHGELVFTI.

Methionine 1 carries the post-translational modification N-acetylmethionine. The active-site Acyl-thioester intermediate is the cysteine 68. Serine 103 lines the CoA pocket. 106–107 (VH) contacts substrate. Catalysis depends on residues histidine 107 and aspartate 122. Tyrosine 208 contributes to the CoA binding site.

It belongs to the arylamine N-acetyltransferase family.

Its subcellular location is the cytoplasm. It carries out the reaction an arylamine + acetyl-CoA = an N-acetylarylamine + CoA. Its function is as follows. Participates in the detoxification of a plethora of hydrazine and arylamine drugs. Acetylates both arylamines and arylalkylamines. In Rattus norvegicus (Rat), this protein is Arylamine N-acetyltransferase 1 (Nat1).